The sequence spans 148 residues: Probable glycine cleavage system H protein 2 (148 aa).

The region spanning 32–114 (TIVVGITDLA…YGKGWLVKMK (83 aa)) is the Lipoyl-binding domain. Residue Lys-73 is modified to N6-lipoyllysine.

It belongs to the GcvH family. In terms of assembly, the glycine cleavage system is composed of four proteins: P, T, L and H. Requires (R)-lipoate as cofactor.

The glycine cleavage system catalyzes the degradation of glycine. The H protein shuttles the methylamine group of glycine from the P protein to the T protein. The chain is Probable glycine cleavage system H protein 2 from Saccharolobus solfataricus (strain ATCC 35092 / DSM 1617 / JCM 11322 / P2) (Sulfolobus solfataricus).